A 204-amino-acid polypeptide reads, in one-letter code: LexA repressor (204 aa).

The H-T-H motif DNA-binding region spans 28–48; that stretch reads RAEIANRLGFKSANAAEEHLK. Catalysis depends on for autocatalytic cleavage activity residues Ser121 and Lys158.

The protein belongs to the peptidase S24 family. In terms of assembly, homodimer.

The catalysed reaction is Hydrolysis of Ala-|-Gly bond in repressor LexA.. Functionally, represses a number of genes involved in the response to DNA damage (SOS response), including recA and lexA. In the presence of single-stranded DNA, RecA interacts with LexA causing an autocatalytic cleavage which disrupts the DNA-binding part of LexA, leading to derepression of the SOS regulon and eventually DNA repair. This Shewanella frigidimarina (strain NCIMB 400) protein is LexA repressor.